Here is a 409-residue protein sequence, read N- to C-terminus: MSHPEAPITPEVEADLAIARRGCDELLVESEFARKLARSRATGVPLRIKLGLDPTAPDIHLGHTVVLNKMRQLQDLGHNVIFLIGDFTSTIGDPSGRNSTRPPLTREQIETNAKTYYAQASLVLDPARTEIRYNSEWCDPLGARGMIQLASRYTVARMMEREDFTRRFKGGVPIAVHEFLYPLLQGYDSVALKADLELGGTDQKFNLLVGRELQKEYGQEQQCILTMPLLVGTDGVEKMSKSKGNYIGISEAPESMFGKLMSISDMLMWRYYELLSFRSLADIAALKAEIDGGRNPRDAKVALAQEIVARFHSPQAAEAALAAFEARFRDGAIPEDMPEVTVGGAPQGILRILREAGLVASGSEAQRNVEQGGVRVNGDRVEDKSLQLSAGTYVVQVGKRKFARVKLVG.

The 'HIGH' region motif lies at Pro-54–His-63. The 'KMSKS' region motif lies at Lys-238 to Ser-242. Residue Lys-241 participates in ATP binding. The region spanning Gln-347–Leu-407 is the S4 RNA-binding domain.

It belongs to the class-I aminoacyl-tRNA synthetase family. TyrS type 2 subfamily. In terms of assembly, homodimer.

It localises to the cytoplasm. The enzyme catalyses tRNA(Tyr) + L-tyrosine + ATP = L-tyrosyl-tRNA(Tyr) + AMP + diphosphate + H(+). Catalyzes the attachment of tyrosine to tRNA(Tyr) in a two-step reaction: tyrosine is first activated by ATP to form Tyr-AMP and then transferred to the acceptor end of tRNA(Tyr). This chain is Tyrosine--tRNA ligase, found in Bordetella parapertussis (strain 12822 / ATCC BAA-587 / NCTC 13253).